Reading from the N-terminus, the 530-residue chain is Potassium voltage-gated channel subfamily A member 6 (530 aa).

The disordered stretch occupies residues 1-35; sequence MRSEKSLTLAAPGEVRGPEGEQQDAGEFQEAEGGG. S3 is modified (phosphoserine). Acidic residues predominate over residues 21–30; it reads EQQDAGEFQE. Residues 172–193 traverse the membrane as a helical segment; it reads PARGIAIVSVLVILISIVIFCL. The segment at 203 to 239 is disordered; it reads GRGGSNEGSGTRMSPASRGSHEEEDEDEDSYAFPGSI. S222 carries the phosphoserine; by CK2 modification. Residues 264 to 285 form a helical membrane-spanning segment; the sequence is FFLVETLCIVWFTFELLVRFSA. The S-palmitoyl cysteine moiety is linked to residue C286. A helical membrane pass occupies residues 297–317; it reads MNIIDLVAIFPYFITLGTELV. A helical; Voltage-sensor transmembrane segment spans residues 339–359; sequence LAILRVIRLVRVFRIFKLSRH. The S4-S5 linker stretch occupies residues 361 to 374; that stretch reads KGLQILGKTLQASM. Residues 375–396 form a helical membrane-spanning segment; sequence RELGLLIFFLFIGVILFSSAVY. An intramembrane region (helical) is located at residues 411 to 422; that stretch reads PDAFWWAVVTMT. The Selectivity filter signature appears at 423 to 428; it reads TVGYGD. Residues 423 to 430 lie within the membrane without spanning it; that stretch reads TVGYGDMY. The chain crosses the membrane as a helical span at residues 438–466; sequence IVGSLCAIAGVLTIALPVPVIVSNFNYFY. Residue S512 is modified to Phosphoserine; by PKA. Residues 527–529 carry the PDZ-binding motif; the sequence is LTE. Residue T528 is modified to Phosphothreonine; by PKA.

The protein belongs to the potassium channel family. A (Shaker) (TC 1.A.1.2) subfamily. Kv1.6/KCNA6 sub-subfamily. In terms of assembly, homotetramer and heterotetramer of potassium channel proteins. Interacts with KCNAB1 and KCNAB2.

It localises to the cell membrane. The enzyme catalyses K(+)(in) = K(+)(out). Voltage-gated potassium channel that mediates transmembrane potassium transport in excitable membranes. Forms tetrameric potassium-selective channels through which potassium ions pass in accordance with their electrochemical gradient. The channel alternates between opened and closed conformations in response to the voltage difference across the membrane. Can form functional homotetrameric channels and heterotetrameric channels that contain variable proportions of KCNA1, KCNA2, KCNA4, KNCA5, KCNA6, and possibly other family members as well; channel properties depend on the type of alpha subunits that are part of the channel. Channel properties are modulated by cytoplasmic beta subunits that regulate the subcellular location of the alpha subunits and promote rapid inactivation. Homotetrameric channels display rapid activation and slow inactivation. This chain is Potassium voltage-gated channel subfamily A member 6 (Kcna6), found in Rattus norvegicus (Rat).